We begin with the raw amino-acid sequence, 69 residues long: Protein SlyX homolog (69 aa).

This sequence belongs to the SlyX family.

This Maricaulis maris (strain MCS10) (Caulobacter maris) protein is Protein SlyX homolog.